Here is a 483-residue protein sequence, read N- to C-terminus: MDFTALFASLNPTFASVSHCGNWIASLSRSGHVLIRNSETLELHHVFLLNAQFIQKVVYLLWKPNLGAEKCHQICVASVDKVFVLDIVQHDYYASIQCDQDPLSSISWSPSGELLLWSSFDSKITVWSLNTQKGYLLPHVKTNVSKVYALHPSMQFCTILSRFNGSDCLQFYQISKKAWILLKECKLPTIDSTGIHWSPDGNWLAVLENVLDAVVYIYHRTGLLFHEYRPNRLIEVGFSDFEWSPFGKYLTLCSYHDSTLHLLETKTFSIVFRLHHCLQYTNTDLEMHIWEEKETIYEQQMTYQKVHKLRTDFPEPSFCSASKIRFNCDETYAATITSKYPNVLWLWNLQNKKLHTVLIQKHHIVYFEWHPGRPDLVVIQTKIRKESKIPSNATFLYFWALSWNTPRVVGVPKKGFNIQKVQWLQPSEFSSRPVIVICGEDAYTVAYIVEDEDESFTEVTQTIISQEVLDNELETTQTISIPS.

A WD repeat occupies 96-137; the sequence is IQCDQDPLSSISWSPSGELLLWSSFDSKITVWSLNTQKGYLL.

This is an uncharacterized protein from Schizosaccharomyces pombe (strain 972 / ATCC 24843) (Fission yeast).